The sequence spans 342 residues: tRNA dimethylallyltransferase (342 aa).

Positions 1-30 are disordered; the sequence is MSANGPAAEPADGGRAVPAGGGEAVPAGGG. Residues 19–30 are compositionally biased toward gly residues; the sequence is AGGGEAVPAGGG. 49–56 contributes to the ATP binding site; the sequence is GPTAAGKS. 51-56 lines the substrate pocket; that stretch reads TAAGKS. The interaction with substrate tRNA stretch occupies residues 74–77; that stretch reads DSMQ.

It belongs to the IPP transferase family. Monomer. Requires Mg(2+) as cofactor.

The catalysed reaction is adenosine(37) in tRNA + dimethylallyl diphosphate = N(6)-dimethylallyladenosine(37) in tRNA + diphosphate. Functionally, catalyzes the transfer of a dimethylallyl group onto the adenine at position 37 in tRNAs that read codons beginning with uridine, leading to the formation of N6-(dimethylallyl)adenosine (i(6)A). The chain is tRNA dimethylallyltransferase from Salinispora arenicola (strain CNS-205).